The primary structure comprises 250 residues: Nuclear transcription factor Y subunit C-4 (250 aa).

The interval 219-250 (GIAYGGQQGHPGYLWQDPQEQQEEPPAEQQSD) is disordered. The span at 238–250 (EQQEEPPAEQQSD) shows a compositional bias: acidic residues.

Belongs to the NFYC/HAP5 subunit family. In terms of assembly, heterotrimeric transcription factor composed of three components, NF-YA, NF-YB and NF-YC. NF-YB and NF-YC must interact and dimerize for NF-YA association and DNA binding. Interacts with NFYB2. Interacts with NFYB8, NFYB10 and HD5/NFYB11.

The protein localises to the nucleus. The protein resides in the cytoplasm. Its function is as follows. Probable transcription factor involved in the regulation of flowering time under long day (LD) conditions. Functions as a repressor of flowering, independently of HD1 and GHD7. Controls flowering time by negatively regulating the expression of EHD1 and HD3A. Component of the NF-Y/HAP transcription factor complex. In Oryza sativa subsp. japonica (Rice), this protein is Nuclear transcription factor Y subunit C-4.